We begin with the raw amino-acid sequence, 545 residues long: Heparanase (545 aa).

The first 37 residues, 1 to 37 (MLACRKPGLRPPLLLLLPLLGPLGPCSPGTPAAAAPA), serve as a signal peptide directing secretion. 64-66 (DAN) provides a ligand contact to heparan sulfate group. Residues 112–159 (PAFEERSYWLSQSNQDICKSGSIPSDVEEKLRLEWPFQEQVLLREQYQ) constitute a propeptide, linker peptide. A disulfide bridge connects residues Cys-129 and Cys-181. Residue 160-164 (KKFTN) participates in heparan sulfate group binding. Asn-164 and Asn-219 each carry an N-linked (GlcNAc...) asparagine glycan. The active-site Proton donor is the Glu-227. Residues 272–282 (QPRRNTVKMLK), His-298, and Arg-305 contribute to the heparan sulfate group site. The interval 290–419 (EVIDSVTWHH…LLFKKLVGNK (130 aa)) is required for heterodimerization with the heparanase 8 kDa subunit. Glu-345 acts as the Nucleophile in catalysis. Heparan sulfate group is bound by residues 350–352 (FGG) and 391–393 (GNY). An intrachain disulfide couples Cys-439 to Cys-544. Residue Asn-461 is glycosylated (N-linked (GlcNAc...) asparagine). Residues 529 to 545 (FSYGFFVIRNAKVAACI) are required for transferring proheparanase to the Golgi apparatus, secretion and subsequent enzyme activity and for enhancement of PKB/AKT1 phosphorylation.

The protein belongs to the glycosyl hydrolase 79 family. In terms of assembly, heterodimer; heterodimer formation between the 8 kDa and the 50 kDa subunits is required for enzyme activity. Interacts with TF; the interaction, inhibited by heparin, enhances the generation of activated factor X and activates coagulation. Interacts with HRG; the interaction is enhanced at acidic pH, partially inhibits binding of HPSE to cell surface receptors and modulates its enzymatic activity. Interacts with SDC1; the interaction enhances the shedding of SDC1. Interacts with HPSE2. In terms of processing, proteolytically processed. The cleavage of the 65 kDa form leads to the generation of a linker peptide, and the 8 kDa and the 50 kDa products. The active form, the 8/50 kDa heterodimer, is resistant to degradation. Complete removal of the linker peptide appears to be a prerequisite to the complete activation of the enzyme. N-glycosylated. Glycosylation of the 50 kDa subunit appears to be essential for its solubility. As to expression, highly expressed in placenta and weakly in the kidney, lung, spleen and uterus.

Its subcellular location is the lysosome membrane. The protein resides in the secreted. It is found in the nucleus. The enzyme catalyses endohydrolysis of (1-&gt;4)-beta-D-glycosidic bonds of heparan sulfate chains in heparan sulfate proteoglycan.. Its activity is regulated as follows. Inhibited by laminarin sulfate and, to a lower extent, by heparin, sulfamin and EDTA. Activated by calcium and magnesium. Functionally, endoglycosidase that cleaves heparan sulfate proteoglycans (HSPGs) into heparan sulfate side chains and core proteoglycans. Participates in extracellular matrix (ECM) degradation and remodeling. Selectively cleaves the linkage between a glucuronic acid unit and an N-sulfo glucosamine unit carrying either a 3-O-sulfo or a 6-O-sulfo group. Can also cleave the linkage between a glucuronic acid unit and an N-sulfo glucosamine unit carrying a 2-O-sulfo group, but not linkages between a glucuronic acid unit and a 2-O-sulfated iduronic acid moiety. Essentially inactive at neutral pH but becomes active under acidic conditions such as during tumor invasion and in inflammatory processes. Facilitates cell migration associated with metastasis, wound healing and inflammation. Enhances shedding of syndecans. Acts as a procoagulant by enhancing the generation of activated factor X/F10 in the presence of tissue factor/TF and activated factor VII/F7. Independent of its enzymatic activity, increases cell adhesion to the extracellular matrix (ECM). Enhances AKT1/PKB phosphorylation, possibly via interaction with a lipid raft-resident receptor. Plays a role in the regulation of osteogenesis. Enhances angiogenesis through up-regulation of SRC-mediated activation of VEGF. Implicated in hair follicle inner root sheath differentiation and hair homeostasis. The polypeptide is Heparanase (HPSE) (Bos taurus (Bovine)).